Here is a 160-residue protein sequence, read N- to C-terminus: Large ribosomal subunit protein uL22c (160 aa).

The protein belongs to the universal ribosomal protein uL22 family. As to quaternary structure, part of the 50S ribosomal subunit.

The protein resides in the plastid. The protein localises to the chloroplast. In terms of biological role, this protein binds specifically to 23S rRNA. Functionally, the globular domain of the protein is located near the polypeptide exit tunnel on the outside of the subunit, while an extended beta-hairpin is found that lines the wall of the exit tunnel in the center of the 70S ribosome. This is Large ribosomal subunit protein uL22c (rpl22) from Draba nemorosa (Woodland whitlowgrass).